The primary structure comprises 31 residues: Cytochrome b6-f complex subunit 6 (31 aa).

Residues 4–24 (VIAYLGLLASVLIGTIVIYLG) traverse the membrane as a helical segment.

The protein belongs to the PetL family. As to quaternary structure, the 4 large subunits of the cytochrome b6-f complex are cytochrome b6, subunit IV (17 kDa polypeptide, PetD), cytochrome f and the Rieske protein, while the 4 small subunits are PetG, PetL, PetM and PetN. The complex functions as a dimer.

The protein localises to the plastid. The protein resides in the chloroplast thylakoid membrane. Its function is as follows. Component of the cytochrome b6-f complex, which mediates electron transfer between photosystem II (PSII) and photosystem I (PSI), cyclic electron flow around PSI, and state transitions. PetL is important for photoautotrophic growth as well as for electron transfer efficiency and stability of the cytochrome b6-f complex. The protein is Cytochrome b6-f complex subunit 6 of Oltmannsiellopsis viridis (Marine flagellate).